A 373-amino-acid polypeptide reads, in one-letter code: Peptide chain release factor 2 (373 aa).

An N5-methylglutamine modification is found at Q251.

Belongs to the prokaryotic/mitochondrial release factor family. In terms of processing, methylated by PrmC. Methylation increases the termination efficiency of RF2.

The protein localises to the cytoplasm. Functionally, peptide chain release factor 2 directs the termination of translation in response to the peptide chain termination codons UGA and UAA. This Salinispora arenicola (strain CNS-205) protein is Peptide chain release factor 2.